The chain runs to 268 residues: MKPPRSRSGSSKDTGPKRIPGKALKSASNPGENDATLDSATARTARNKTVSLRTARGRTTAQQRWLNRQLNDPYVAAARKQGWRSRAAFKLIEIDDRFKLIGEGTRIIDLGAAPGGWTQVAVKRGAKHVVGLDLLPVDPVAGAEIIEGDFTDPEMPDRLKDMLGGPADLVMSDMAPNTTGHAATDHMRIMGLAEGALDFAFQVLAEGGSFIAKVFQGGSEKDMLALMKTAFSSVKHVKPPASRKESSELYVIATGFRPERLLESSKGA.

The segment at 1-60 is disordered; sequence MKPPRSRSGSSKDTGPKRIPGKALKSASNPGENDATLDSATARTARNKTVSLRTARGRTT. A compositionally biased stretch (polar residues) spans 26–52; the sequence is SASNPGENDATLDSATARTARNKTVSL. S-adenosyl-L-methionine contacts are provided by Gly-115, Trp-117, Asp-133, Asp-149, and Asp-173. Lys-213 functions as the Proton acceptor in the catalytic mechanism.

It belongs to the class I-like SAM-binding methyltransferase superfamily. RNA methyltransferase RlmE family.

Its subcellular location is the cytoplasm. The enzyme catalyses uridine(2552) in 23S rRNA + S-adenosyl-L-methionine = 2'-O-methyluridine(2552) in 23S rRNA + S-adenosyl-L-homocysteine + H(+). Functionally, specifically methylates the uridine in position 2552 of 23S rRNA at the 2'-O position of the ribose in the fully assembled 50S ribosomal subunit. The sequence is that of Ribosomal RNA large subunit methyltransferase E from Gluconobacter oxydans (strain 621H) (Gluconobacter suboxydans).